Here is a 233-residue protein sequence, read N- to C-terminus: Nickel import system ATP-binding protein NikE (233 aa).

An ABC transporter domain is found at Ile2–Val228. ATP is bound at residue Gly35–Ser42.

The protein belongs to the ABC transporter superfamily. As to quaternary structure, the complex is composed of two ATP-binding proteins (NikD and NikE), two transmembrane proteins (NikB and NikC) and a solute-binding protein (NikA).

Its subcellular location is the cell membrane. The enzyme catalyses Ni(2+)(out) + ATP + H2O = Ni(2+)(in) + ADP + phosphate + H(+). Functionally, part of the ABC transporter complex NikABCDE (Opp2) involved in nickel import. Probably responsible for energy coupling to the transport system. This is Nickel import system ATP-binding protein NikE from Staphylococcus aureus (strain USA300).